The chain runs to 235 residues: Elongation factor Tu (235 aa).

One can recognise a tr-type G domain in the interval 1 to 125; sequence KNMITGAAQM…EVDEYIPTPE (125 aa). 47–50 provides a ligand contact to GTP; that stretch reads NKED.

The protein belongs to the TRAFAC class translation factor GTPase superfamily. Classic translation factor GTPase family. EF-Tu/EF-1A subfamily. As to quaternary structure, monomer.

The protein localises to the cytoplasm. The enzyme catalyses GTP + H2O = GDP + phosphate + H(+). Its function is as follows. GTP hydrolase that promotes the GTP-dependent binding of aminoacyl-tRNA to the A-site of ribosomes during protein biosynthesis. In Gloeothece membranacea (strain PCC 6501 / SAG 26.84), this protein is Elongation factor Tu (tufA).